Reading from the N-terminus, the 161-residue chain is Endoribonuclease YbeY (161 aa).

Zn(2+)-binding residues include H121, H125, and H131.

Belongs to the endoribonuclease YbeY family. Zn(2+) serves as cofactor.

It localises to the cytoplasm. In terms of biological role, single strand-specific metallo-endoribonuclease involved in late-stage 70S ribosome quality control and in maturation of the 3' terminus of the 16S rRNA. The chain is Endoribonuclease YbeY from Xylella fastidiosa (strain 9a5c).